The sequence spans 277 residues: Large ribosomal subunit protein uL2 (277 aa).

The disordered stretch occupies residues 222–277; the sequence is GSVMNPNDHPHGGGEGKAPVGRKAPSTPWGKPALGLKTRNKKAKSDKLIVRRRNEK. The segment covering 264 to 277 has biased composition (basic and acidic residues); it reads AKSDKLIVRRRNEK.

It belongs to the universal ribosomal protein uL2 family. As to quaternary structure, part of the 50S ribosomal subunit. Forms a bridge to the 30S subunit in the 70S ribosome.

Its function is as follows. One of the primary rRNA binding proteins. Required for association of the 30S and 50S subunits to form the 70S ribosome, for tRNA binding and peptide bond formation. It has been suggested to have peptidyltransferase activity; this is somewhat controversial. Makes several contacts with the 16S rRNA in the 70S ribosome. In Streptococcus thermophilus (strain CNRZ 1066), this protein is Large ribosomal subunit protein uL2.